Consider the following 529-residue polypeptide: Cytokinin dehydrogenase 4 (529 aa).

The first 27 residues, 1–27, serve as a signal peptide directing secretion; it reads MRGAMKPSIVHCLKLLMLLALGGVTMH. The 182-residue stretch at 63–244 folds into the FAD-binding PCMH-type domain; the sequence is CSLLPAAVLH…TRARIALEPA (182 aa). Residues Ala-99, Gly-101, and Gly-103 each contribute to the FAD site. His-104 bears the Pros-8alpha-FAD histidine mark. Residues Ser-105, Gln-109, Asp-168, Thr-173, Ser-179, Val-183, and Ile-234 each contribute to the FAD site. 3 N-linked (GlcNAc...) asparagine glycosylation sites follow: Asn-285, Asn-419, and Asn-425. Residues Tyr-479 and Gln-517 each coordinate FAD.

It belongs to the oxygen-dependent FAD-linked oxidoreductase family. As to quaternary structure, monomer. Requires FAD as cofactor. Expressed in inflorescence meristems.

It is found in the secreted. The protein localises to the extracellular space. It carries out the reaction N(6)-dimethylallyladenine + A + H2O = 3-methyl-2-butenal + adenine + AH2. Catalyzes the oxidation of cytokinins, a family of N(6)-substituted adenine derivatives that are plant hormones, where the substituent is an isopentenyl group. This chain is Cytokinin dehydrogenase 4 (CKX4), found in Oryza sativa subsp. japonica (Rice).